Reading from the N-terminus, the 887-residue chain is MSTVPIESLLHHSYLRHNSKVNRGNRSFIPISLNLRSHFTSNKLLHSIGKSVGVSSMNKSPVAIRATSSDTAVVETAQSDDVIFKEIFPVQRIEKAEGKIYVRLKEVKEKNWELSVGCSIPGKWILHWGVSYVGDTGSEWDQPPEDMRPPGSIAIKDYAIETPLKKLSEGDSFFEVAINLNLESSVAALNFVLKDEETGAWYQHKGRDFKVPLVDDVPDNGNLIGAKKGFGALGQLSNIPLKQDKSSAETDSIEERKGLQEFYEEMPISKRVADDNSVSVTARKCPETSKNIVSIETDLPGDVTVHWGVCKNGTKKWEIPSEPYPEETSLFKNKALRTRLQRKDDGNGSFGLFSLDGKLEGLCFVLKLNENTWLNYRGEDFYVPFLTSSSSPVETEAAQVSKPKRKTDKEVSASGFTKEIITEIRNLAIDISSHKNQKTNVKEVQENILQEIEKLAAEAYSIFRSTTPAFSEEGVLEAEADKPDIKISSGTGSGFEILCQGFNWESNKSGRWYLELQEKADELASLGFTVLWLPPPTESVSPEGYMPKDLYNLNSRYGTIDELKDTVKKFHKVGIKVLGDAVLNHRCAHFKNQNGVWNLFGGRLNWDDRAVVADDPHFQGRGNKSSGDNFHAAPNIDHSQDFVRKDIKEWLCWMMEEVGYDGWRLDFVRGFWGGYVKDYMDASKPYFAVGEYWDSLSYTYGEMDYNQDAHRQRIVDWINATSGAAGAFDVTTKGILHTALQKCEYWRLSDPKGKPPGVVGWWPSRAVTFIENHDTGSTQGHWRFPEGKEMQGYAYILTHPGTPAVFFDHIFSDYHSEIAALLSLRNRQKLHCRSEVNIDKSERDVYAAIIDEKVAMKIGPGHYEPPNGSQNWSVAVEGRDYKVWETS.

Residues 1–55 (MSTVPIESLLHHSYLRHNSKVNRGNRSFIPISLNLRSHFTSNKLLHSIGKSVGVS) constitute a chloroplast transit peptide. A disulfide bond links Cys499 and Cys587. Substrate is bound by residues 545-546 (YM) and 664-669 (RLDFVR). The Nucleophile role is filled by Asp666. Glu691 (proton donor) is an active-site residue. Substrate-binding positions include Trp693, Ser695, Gln712, Lys754, 760 to 762 (GWW), His773, Gln779, Lys857, and Trp884.

It belongs to the glycosyl hydrolase 13 family. Requires Ca(2+) as cofactor. Expressed in developing siliques.

It is found in the plastid. Its subcellular location is the chloroplast. The catalysed reaction is Endohydrolysis of (1-&gt;4)-alpha-D-glucosidic linkages in polysaccharides containing three or more (1-&gt;4)-alpha-linked D-glucose units.. Redox-regulated, with the highest activity under reducing conditions. The midpoint redox potential is -329 mV. The disulfide bridge between Cys-499 and Cys-587 inhibits catalysis. Inhibited by CuCl(2) and H(2)O(2). Functionally, possesses endoamylolytic activity in vitro, but seems not required for breakdown of transitory starch in leaves. May be involved in the determination of the final structure of glucans by shortening long linear phospho-oligosaccharides in the chloroplast stroma. Can act on both soluble and insoluble glucan substrates to release small linear and branched malto-oligosaccharides. Works synergistically with beta-amylase toward efficient starch degradation. Has activity against p-nitrophenyl maltoheptaoside (BPNP-G7), amylopectin and beta-limit dextrin. Involved in stress-induced starch degradation. The protein is Alpha-amylase 3, chloroplastic of Arabidopsis thaliana (Mouse-ear cress).